We begin with the raw amino-acid sequence, 125 residues long: Small ribosomal subunit protein eS8 (125 aa).

It belongs to the eukaryotic ribosomal protein eS8 family. As to quaternary structure, part of the 30S ribosomal subunit.

This Methanosarcina barkeri (strain Fusaro / DSM 804) protein is Small ribosomal subunit protein eS8.